The following is a 31-amino-acid chain: Nemertide alpha-4 (31 aa).

Intrachain disulfides connect cysteine 2-cysteine 16, cysteine 9-cysteine 20, and cysteine 15-cysteine 26. 2 positions are modified to 4-hydroxyproline: proline 28 and proline 29.

This sequence belongs to the nemertide family. In terms of tissue distribution, confined to the epidermis and to the mucus layer.

The protein localises to the secreted. Functionally, potent toxin, demonstrating strong inhibitory effects on insect sodium channels (Nav) and reduced activity on mammalian sodium channels. Potently inhibits inactivation of insect sodium channels of B.germanica (BgNav1) (EC(50)=11.1 nM). Also delays the inactivation of most mammalian Nav (human Nav1.1/SCN1A; EC(50)=92 nM, rat Nav1.2/SCN2A; EC(50)=134.2 nM, rat Nav1.3/SCN3A; EC(50)=12.9 nM, rat Nav1.4/SCN4A; EC(50)=14.6 nM, human Nav1.5/SCN5A; EC(50)=27.8 nM, mouse Nav1.6/SCN8A; EC(50)=123.6 nM, human Nav1.9/SCN9A; EC(50)=80.5 nM). Inactivation is completely prevented by a concentration of 1 uM, resulting in sustained, non-inactivating currents. In addition, the toxin significantly enhances the recovery from inactivation, and the open state is not required for the toxin to interact with the channel. In vivo, injection into brine shrimp (Artemia salina) stops movement or causes death after 24 hours (EC(50)=0.4 uM). This chain is Nemertide alpha-4, found in Lineus sanguineus (Ribbon worm).